The primary structure comprises 607 residues: MAGFPGKEAGPPGGWRKCQEDESPENERHENFYAEIDDFAPSVLTPTGSDSGAGEEDDDGLYQVPTHWPPLMAPTGLSGERVPCRTQAAVTSNTGNSPGSRHTSCPFTLPRGAQPPAPAHQKPTAPTPKPRSRECGPSKTPDPFSWFRKTSCTEGGADSTSRSFMYQKGFEEGLAGLGLDDKSDCESEDESNFRRPSSHSALKQKNGGKGKPSGLFEHLAAHGREFSKLSKHAAQLKRLSGSVMNVLNLDDAQDTRQAKAQRKESTRVPIVTHLTNHVPVIKPACSLFLEGAPGVGKTTMLNHLKAVFGDLTIVVPEPMRYWTHVYENAIKAMHKNVTRARHGREDTSAEVLACQMKFTTPFRVLASRKRSLLVTESGARSVAPLDCWILHDRHLLSASVVFPLMLLRSQLLSYSDFIQVLATFTADPGDTIVWMKLNVEENMRRLKKRGRKHESGLDAGYLKSVNDAYHAVYCAWLLTQYFAPEDIVKVCAGLTTITTVCHQSHTPIIRSGVAEKLYKNSIFSVLKEVIQPFRADAVLLEVCLAFTRTLAYLQFVLVDLSEFQDDLPGCWTEIYMQALKNPAIRSQFFDWAGLSKVISDFERGNRD.

Disordered stretches follow at residues 1–160 and 180–215; these read MAGF…ADST and DDKSDCESEDESNFRRPSSHSALKQKNGGKGKPSGL. Residues 17-32 are compositionally biased toward basic and acidic residues; that stretch reads KCQEDESPENERHENF. 3 stretches are compositionally biased toward polar residues: residues 88 to 106, 148 to 160, and 194 to 203; these read AAVTSNTGNSPGSRHTSCP, RKTSCTEGGADST, and RRPSSHSALK. 291 to 298 lines the ATP pocket; that stretch reads GAPGVGKT. Glutamate 317 (proton acceptor) is an active-site residue. Glutamine 355 is a substrate binding site. An ATP-binding site is contributed by arginine 445. Arginine 451 is a binding site for substrate.

It belongs to the herpesviridae thymidine kinase family. As to quaternary structure, homodimer.

Its subcellular location is the virion tegument. It is found in the host nucleus. The enzyme catalyses thymidine + ATP = dTMP + ADP + H(+). Its function is as follows. Catalyzes the transfer of the gamma-phospho group of ATP to thymidine to generate dTMP in the salvage pathway of pyrimidine synthesis. The dTMP serves as a substrate for DNA polymerase during viral DNA replication. Allows the virus to be reactivated and to grow in non-proliferative cells lacking a high concentration of phosphorylated nucleic acid precursors. The polypeptide is Thymidine kinase (Epstein-Barr virus (strain AG876) (HHV-4)).